Here is a 124-residue protein sequence, read N- to C-terminus: Large ribosomal subunit protein bL21 (124 aa).

Belongs to the bacterial ribosomal protein bL21 family. Part of the 50S ribosomal subunit. Contacts protein L20.

Functionally, this protein binds to 23S rRNA in the presence of protein L20. In Synechocystis sp. (strain ATCC 27184 / PCC 6803 / Kazusa), this protein is Large ribosomal subunit protein bL21.